Reading from the N-terminus, the 245-residue chain is DNA polymerase sliding clamp (245 aa).

It belongs to the PCNA family. As to quaternary structure, homotrimer. The subunits circularize to form a toroid; DNA passes through its center. Replication factor C (RFC) is required to load the toroid on the DNA.

Sliding clamp subunit that acts as a moving platform for DNA processing. Responsible for tethering the catalytic subunit of DNA polymerase and other proteins to DNA during high-speed replication. In Methanosarcina acetivorans (strain ATCC 35395 / DSM 2834 / JCM 12185 / C2A), this protein is DNA polymerase sliding clamp.